The primary structure comprises 368 residues: Phosphate acyltransferase (368 aa).

The disordered stretch occupies residues 337 to 368 (LEQAARDASGAGQASPIAGQPAEPYAAQSSKA).

The protein belongs to the PlsX family. In terms of assembly, homodimer. Probably interacts with PlsY.

The protein localises to the cytoplasm. The enzyme catalyses a fatty acyl-[ACP] + phosphate = an acyl phosphate + holo-[ACP]. The protein operates within lipid metabolism; phospholipid metabolism. Its function is as follows. Catalyzes the reversible formation of acyl-phosphate (acyl-PO(4)) from acyl-[acyl-carrier-protein] (acyl-ACP). This enzyme utilizes acyl-ACP as fatty acyl donor, but not acyl-CoA. The chain is Phosphate acyltransferase from Paraburkholderia phytofirmans (strain DSM 17436 / LMG 22146 / PsJN) (Burkholderia phytofirmans).